Consider the following 736-residue polypeptide: Elongation factor 2 (736 aa).

The tr-type G domain occupies 18-234 (TRVRNIGIIA…VIDAYTASDK (217 aa)). Residues 27–34 (AHVDHGKT), 93–97 (DTPGH), and 147–150 (NKVD) each bind GTP. Residue H603 is modified to Diphthamide.

The protein belongs to the TRAFAC class translation factor GTPase superfamily. Classic translation factor GTPase family. EF-G/EF-2 subfamily.

It localises to the cytoplasm. Its function is as follows. Catalyzes the GTP-dependent ribosomal translocation step during translation elongation. During this step, the ribosome changes from the pre-translocational (PRE) to the post-translocational (POST) state as the newly formed A-site-bound peptidyl-tRNA and P-site-bound deacylated tRNA move to the P and E sites, respectively. Catalyzes the coordinated movement of the two tRNA molecules, the mRNA and conformational changes in the ribosome. The chain is Elongation factor 2 from Saccharolobus islandicus (strain Y.N.15.51 / Yellowstone #2) (Sulfolobus islandicus).